The following is a 256-amino-acid chain: Global transcriptional regulator CodY (256 aa).

Residues 1-155 (MSLLSKTREL…AATVIGMEIL (155 aa)) are GAF domain. Positions 203-222 (ASKVADRVGITRSVIVNALR) form a DNA-binding region, H-T-H motif.

The protein belongs to the CodY family.

It localises to the cytoplasm. In terms of biological role, DNA-binding global transcriptional regulator which is involved in the adaptive response to starvation and acts by directly or indirectly controlling the expression of numerous genes in response to nutrient availability. During rapid exponential growth, CodY is highly active and represses genes whose products allow adaptation to nutrient depletion. The protein is Global transcriptional regulator CodY of Staphylococcus epidermidis (strain ATCC 35984 / DSM 28319 / BCRC 17069 / CCUG 31568 / BM 3577 / RP62A).